We begin with the raw amino-acid sequence, 348 residues long: Fructose-1,6-bisphosphatase class 1 (348 aa).

4 residues coordinate Mg(2+): E107, D129, I131, and D132. Substrate contacts are provided by residues D132–S135, N224, Y252, and K282. Position 288 (E288) interacts with Mg(2+).

It belongs to the FBPase class 1 family. Homotetramer. The cofactor is Mg(2+).

Its subcellular location is the cytoplasm. It catalyses the reaction beta-D-fructose 1,6-bisphosphate + H2O = beta-D-fructose 6-phosphate + phosphate. It functions in the pathway carbohydrate biosynthesis; Calvin cycle. The sequence is that of Fructose-1,6-bisphosphatase class 1 from Microcystis aeruginosa (strain NIES-843 / IAM M-2473).